The primary structure comprises 120 residues: Ribonuclease P protein component (120 aa).

It belongs to the RnpA family. As to quaternary structure, consists of a catalytic RNA component (M1 or rnpB) and a protein subunit.

The catalysed reaction is Endonucleolytic cleavage of RNA, removing 5'-extranucleotides from tRNA precursor.. Functionally, RNaseP catalyzes the removal of the 5'-leader sequence from pre-tRNA to produce the mature 5'-terminus. It can also cleave other RNA substrates such as 4.5S RNA. The protein component plays an auxiliary but essential role in vivo by binding to the 5'-leader sequence and broadening the substrate specificity of the ribozyme. The chain is Ribonuclease P protein component from Chelativorans sp. (strain BNC1).